We begin with the raw amino-acid sequence, 200 residues long: TATA-box-binding protein 2 (200 aa).

2 consecutive repeat copies span residues 25–101 (LQNI…ARIV) and 115–192 (IQNI…YPVL).

The protein belongs to the TBP family. In terms of assembly, belongs to the TFIID complex together with the TBP-associated factors (TAFs). Binds DNA as monomer. Interacts with TAF1 (via N-terminus). Interacts with TFIIB1. Interacts with PTF2. Interacts with HAT5/ATHB-1 and ATHB-7. Component of a nuclear protein complex containing at least TATA binding proteins (TBPs, e.g. TBP1 and TBP2) and ATX1.

It localises to the nucleus. General transcription factor (GTF) that functions at the core of the DNA-binding multiprotein factor TFIID. Binding of TFIID to the TATA box is the initial transcriptional step of the pre-initiation complex (PIC), playing a role in the activation of eukaryotic genes transcribed by RNA polymerase II. Interacts with TFIIB1 and is required for activated transcription and possibly basal transcription. May act as GTF of RNA polymerase I-dependent transcription and rRNA synthesis. Forms a ternary complex with PBRP1 and the rDNA promoter region. This chain is TATA-box-binding protein 2, found in Arabidopsis thaliana (Mouse-ear cress).